The sequence spans 126 residues: Small ribosomal subunit protein uS8 (126 aa).

It belongs to the universal ribosomal protein uS8 family. Part of the 30S ribosomal subunit. Contacts proteins S5 and S12.

Its function is as follows. One of the primary rRNA binding proteins, it binds directly to 16S rRNA central domain where it helps coordinate assembly of the platform of the 30S subunit. This Nitratidesulfovibrio vulgaris (strain ATCC 29579 / DSM 644 / CCUG 34227 / NCIMB 8303 / VKM B-1760 / Hildenborough) (Desulfovibrio vulgaris) protein is Small ribosomal subunit protein uS8.